Consider the following 253-residue polypeptide: Rab GTPase-activating protein 1-like, isoform 10 (253 aa).

A coiled-coil region spans residues 8-222; the sequence is SMTFEERENR…MNEIQAAKNS (215 aa). The segment at 233–253 is disordered; the sequence is TATGTQPLQPAPVTQPPKEST.

The chain is Rab GTPase-activating protein 1-like, isoform 10 (RABGAP1L) from Homo sapiens (Human).